Consider the following 389-residue polypeptide: S-adenosylmethionine synthase (389 aa).

An ATP-binding site is contributed by His-17. Asp-19 is a Mg(2+) binding site. Glu-45 lines the K(+) pocket. Residues Glu-58 and Gln-101 each contribute to the L-methionine site. Residues 101-111 (QSPDIAQGVTE) form a flexible loop region. ATP-binding positions include 168-170 (DSK), 234-235 (RF), Asp-243, 249-250 (RK), Ala-266, and Lys-270. Position 243 (Asp-243) interacts with L-methionine. Residue Lys-274 coordinates L-methionine.

This sequence belongs to the AdoMet synthase family. Homotetramer; dimer of dimers. It depends on Mg(2+) as a cofactor. The cofactor is K(+).

It is found in the cytoplasm. The catalysed reaction is L-methionine + ATP + H2O = S-adenosyl-L-methionine + phosphate + diphosphate. The protein operates within amino-acid biosynthesis; S-adenosyl-L-methionine biosynthesis; S-adenosyl-L-methionine from L-methionine: step 1/1. Catalyzes the formation of S-adenosylmethionine (AdoMet) from methionine and ATP. The overall synthetic reaction is composed of two sequential steps, AdoMet formation and the subsequent tripolyphosphate hydrolysis which occurs prior to release of AdoMet from the enzyme. The chain is S-adenosylmethionine synthase from Geotalea uraniireducens (strain Rf4) (Geobacter uraniireducens).